A 31-amino-acid chain; its full sequence is U6-ctenitoxin-Co1a (31 aa).

2 cysteine pairs are disulfide-bonded: Cys2-Cys18 and Cys9-Cys23.

Expressed by the venom gland.

Its subcellular location is the secreted. Functionally, antagonist of L-type calcium channels (Cav1/CACNA1). In Ctenus ornatus (Brazilian spider), this protein is U6-ctenitoxin-Co1a.